The sequence spans 258 residues: Imidazole glycerol phosphate synthase subunit HisF (258 aa).

Catalysis depends on residues Asp-11 and Asp-130.

It belongs to the HisA/HisF family. Heterodimer of HisH and HisF.

The protein localises to the cytoplasm. It catalyses the reaction 5-[(5-phospho-1-deoxy-D-ribulos-1-ylimino)methylamino]-1-(5-phospho-beta-D-ribosyl)imidazole-4-carboxamide + L-glutamine = D-erythro-1-(imidazol-4-yl)glycerol 3-phosphate + 5-amino-1-(5-phospho-beta-D-ribosyl)imidazole-4-carboxamide + L-glutamate + H(+). Its pathway is amino-acid biosynthesis; L-histidine biosynthesis; L-histidine from 5-phospho-alpha-D-ribose 1-diphosphate: step 5/9. Its function is as follows. IGPS catalyzes the conversion of PRFAR and glutamine to IGP, AICAR and glutamate. The HisF subunit catalyzes the cyclization activity that produces IGP and AICAR from PRFAR using the ammonia provided by the HisH subunit. This is Imidazole glycerol phosphate synthase subunit HisF from Methylobacterium nodulans (strain LMG 21967 / CNCM I-2342 / ORS 2060).